A 397-amino-acid chain; its full sequence is Probable peptidoglycan glycosyltransferase FtsW (397 aa).

Residues 1–26 (MSPRNSALERFRQHQKIPEKRWQRLA) lie on the Cytoplasmic side of the membrane. The helical transmembrane segment at 27 to 47 (FPDVGLLLCWLALIVIGMVMV) threads the bilayer. At 48-69 (TSSSLSEAHVERLSTHHFAIRQ) the chain is on the periplasmic side. The chain crosses the membrane as a helical span at residues 70–90 (GIFYVGSSIFAYIAFMLGTNF). The Cytoplasmic segment spans residues 91–96 (YREKAK). A helical transmembrane segment spans residues 97 to 117 (FILGLAFLGLLLVYAPGIGVV). Over 118–126 (VNGSRRWLN) the chain is Periplasmic. A helical membrane pass occupies residues 127 to 147 (LGVINLQVGEFAKLAVFIFTA). At 148–159 (AYLQHHTQRLDH) the chain is on the cytoplasmic side. The helical transmembrane segment at 160–180 (SWQPIIGLLAVTACFALMFYL) threads the bilayer. Over 181–185 (QPDFG) the chain is Periplasmic. The chain crosses the membrane as a helical span at residues 186 to 206 (TMVVIVATVLGMLFLSGVSIW). Position 207 (Arg-207) is a topological domain, cytoplasmic. Residues 208–228 (LLLLGVLIAPAMVWVLISESY) form a helical membrane-spanning segment. Over 229–294 (RLRRLTTFIN…IFSIIAEETG (66 aa)) the chain is Periplasmic. Residues 295-315 (LVGALIVMAILMILVWRAFAI) traverse the membrane as a helical segment. Over 316–328 (GYLADRMRKRFSS) the chain is Cytoplasmic. Residues 329–349 (LLAYGIGLWLGLQSLINIGVT) form a helical membrane-spanning segment. Residues 350-359 (TGALPTKGLT) lie on the Periplasmic side of the membrane. Residues 360–380 (LPLISYGGSSILMTSIALAIL) traverse the membrane as a helical segment. At 381–397 (ARIDAESRFIARLEGKI) the chain is on the cytoplasmic side.

It belongs to the SEDS family. FtsW subfamily.

It is found in the cell inner membrane. It catalyses the reaction [GlcNAc-(1-&gt;4)-Mur2Ac(oyl-L-Ala-gamma-D-Glu-L-Lys-D-Ala-D-Ala)](n)-di-trans,octa-cis-undecaprenyl diphosphate + beta-D-GlcNAc-(1-&gt;4)-Mur2Ac(oyl-L-Ala-gamma-D-Glu-L-Lys-D-Ala-D-Ala)-di-trans,octa-cis-undecaprenyl diphosphate = [GlcNAc-(1-&gt;4)-Mur2Ac(oyl-L-Ala-gamma-D-Glu-L-Lys-D-Ala-D-Ala)](n+1)-di-trans,octa-cis-undecaprenyl diphosphate + di-trans,octa-cis-undecaprenyl diphosphate + H(+). Its pathway is cell wall biogenesis; peptidoglycan biosynthesis. Peptidoglycan polymerase that is essential for cell division. The chain is Probable peptidoglycan glycosyltransferase FtsW from Dichelobacter nodosus (strain VCS1703A).